Here is a 67-residue protein sequence, read N- to C-terminus: Large ribosomal subunit protein bL35 (67 aa).

This sequence belongs to the bacterial ribosomal protein bL35 family.

This chain is Large ribosomal subunit protein bL35, found in Methylorubrum populi (strain ATCC BAA-705 / NCIMB 13946 / BJ001) (Methylobacterium populi).